We begin with the raw amino-acid sequence, 155 residues long: uncharacterized protein (155 aa).

2 disordered regions span residues 1–22 (MSSQ…TFTF) and 110–155 (NKEP…DTQA). Ser-2 carries the post-translational modification N-acetylserine. A phosphoserine mark is found at Ser-136, Ser-144, and Ser-146. Residues 136 to 155 (SDEDLDAESDSDGEDGDTQA) are compositionally biased toward acidic residues.

This is an uncharacterized protein from Mus musculus (Mouse).